Reading from the N-terminus, the 673-residue chain is Xyloglucan glycosyltransferase 4 (673 aa).

Helical transmembrane passes span 90–110 and 144–164; these read FIKA…VAHF and IAPL…IQSL. Asp-238 is an active-site residue. Substrate-binding residues include Asp-297 and Asp-299. Asp-391 is an active-site residue. The next 2 helical transmembrane spans lie at 469 to 489 and 494 to 514; these read LILP…TMFI and LPLW…ILPS. Ser-581 carries the phosphoserine modification. A run of 2 helical transmembrane segments spans residues 623-643 and 648-668; these read VFKK…RSFL and LHFY…LDLI.

Belongs to the glycosyltransferase 2 family. Plant cellulose synthase-like C subfamily. In terms of assembly, homodimer. Interacts with XXT5. Interacts with FUT1, MUR3 and XLT2. As to expression, expressed in seedlings, roots, leaves, stems, flowers and seeds.

The protein localises to the golgi apparatus membrane. In terms of biological role, beta-1,4-glucan synthase rather involved in the synthesis of the xyloglucan backbone than cellulose. Seems to work simultaneously with xyloglucan 6-xylosyltransferase. Xyloglucan is a noncellulosic polysaccharides of plant cell wall and consists of a glucan backbone substituted by xylose, galactose and fucose. Associates with other xyloglucan-synthesizing enzymes to form multiprotein complexes for xyloglucan synthesis in the Golgi. The sequence is that of Xyloglucan glycosyltransferase 4 from Arabidopsis thaliana (Mouse-ear cress).